We begin with the raw amino-acid sequence, 838 residues long: MTQVTVKQLADEVKTPVERLLQQMREAGLPHTAAEEHVSDSEKQSLLTHLKSSHKAKVEEPRKITLQRKTTSTLRVAGSKSISVEVRKKKVFVQRSPEEIEAERQRELEERRAVENAARQKAEEEAKRRAEEEARRQPAPVAEPVAAQAAAPAPAPVVEPVQEAPVATAAPAADARKKDEQRRPDKTRNDDNRRGGDGERKNAPHRASVKEKAPAPRVAPRTTDEESDGFRRGGRGKAKLKKRNAHGFQSPTGPVVRDVQIGETITVGELAQQMSVKAAEVIKFMFKLGTPATINQVLDQETAQLVAEELGHKVTLVSDTALEDSLAESLKFEGEAVARAPVVTVMGHVDHGKTSLLDYIRRAKVAAGEAGGITQHIGAYHVETERGMVTFLDTPGHAAFTAMRARGAKATDIVILVVAADDGVMPQTVEAVQHAQAAGVPLVVAVNKIDKPGADLDRIRSELSVHGVTSEDWGGDTPFVPVSAKMGTGVDDLLEAVLLQAEVLELKATPSAPGRGVVVESRLDKGRGPVATVLVQDGTLRQGDMVLVGSNYGRVRAMLDENGKPIKEAGPSIPVEILGLDGTPDAGDEMSVVADEKKAREVALFRQGKFREVKLARAHAGKLENIFESMGQEEKKTLNIVLKSDVRGSLEALQGALNGLGNDEVQVRVVGGGVGGITESDANLALASNAVLFGFNVRADAGARKIVEQEGLDMRYYNVIYDIIEDVKKALTGMLGSDVRENILGVAEVRDVFRSPKFGAIAGCMVIEGVVHRNRPIRVLREDIVIFEGELESLRRFKDDASEVRAGMECGIGVKSYNDVKVGDKIEVFEKVQVARSL.

Disordered stretches follow at residues 30-60 and 94-254; these read PHTAAEEHVSDSEKQSLLTHLKSSHKAKVEE and QRSP…PTGP. 2 stretches are compositionally biased toward basic and acidic residues: residues 33–43 and 96–136; these read AAEEHVSDSEK and SPEE…EARR. A compositionally biased stretch (low complexity) spans 137 to 173; sequence QPAPVAEPVAAQAAAPAPAPVVEPVQEAPVATAAPAA. 2 stretches are compositionally biased toward basic and acidic residues: residues 174-214 and 222-231; these read DARK…EKAP and TTDEESDGFR. The segment covering 232 to 245 has biased composition (basic residues); that stretch reads RGGRGKAKLKKRNA. The region spanning 338-507 is the tr-type G domain; that stretch reads ARAPVVTVMG…LLQAEVLELK (170 aa). The tract at residues 347 to 354 is G1; sequence GHVDHGKT. 347-354 is a GTP binding site; sequence GHVDHGKT. The G2 stretch occupies residues 372–376; it reads GITQH. A G3 region spans residues 393–396; that stretch reads DTPG. Residues 393–397 and 447–450 each bind GTP; these read DTPGH and NKID. Residues 447–450 form a G4 region; sequence NKID. The tract at residues 483-485 is G5; the sequence is SAK.

Belongs to the TRAFAC class translation factor GTPase superfamily. Classic translation factor GTPase family. IF-2 subfamily.

Its subcellular location is the cytoplasm. Its function is as follows. One of the essential components for the initiation of protein synthesis. Protects formylmethionyl-tRNA from spontaneous hydrolysis and promotes its binding to the 30S ribosomal subunits. Also involved in the hydrolysis of GTP during the formation of the 70S ribosomal complex. This Pseudomonas fluorescens (strain ATCC BAA-477 / NRRL B-23932 / Pf-5) protein is Translation initiation factor IF-2.